Consider the following 615-residue polypeptide: 1-deoxy-D-xylulose-5-phosphate synthase (615 aa).

Thiamine diphosphate is bound by residues H76 and 117–119 (GHS). D148 contributes to the Mg(2+) binding site. Residues 149–150 (GA), N177, Y284, and E365 contribute to the thiamine diphosphate site. N177 is a binding site for Mg(2+).

It belongs to the transketolase family. DXPS subfamily. In terms of assembly, homodimer. Mg(2+) serves as cofactor. Requires thiamine diphosphate as cofactor.

It carries out the reaction D-glyceraldehyde 3-phosphate + pyruvate + H(+) = 1-deoxy-D-xylulose 5-phosphate + CO2. It participates in metabolic intermediate biosynthesis; 1-deoxy-D-xylulose 5-phosphate biosynthesis; 1-deoxy-D-xylulose 5-phosphate from D-glyceraldehyde 3-phosphate and pyruvate: step 1/1. Its function is as follows. Catalyzes the acyloin condensation reaction between C atoms 2 and 3 of pyruvate and glyceraldehyde 3-phosphate to yield 1-deoxy-D-xylulose-5-phosphate (DXP). The chain is 1-deoxy-D-xylulose-5-phosphate synthase from Francisella tularensis subsp. tularensis (strain FSC 198).